A 305-amino-acid chain; its full sequence is Olfactory receptor 9G1 (305 aa).

The Extracellular portion of the chain corresponds to 1-24 (MQRSNHTVTEFILLGFTTDPGMQL). A glycan (N-linked (GlcNAc...) asparagine) is linked at Asn-5. A helical transmembrane segment spans residues 25-45 (GLFVVFLGVYSLTVVGNSTLI). Over 46 to 53 (VLICNDSC) the chain is Cytoplasmic. Residues 54–74 (LHTPMYFFTGNLSFLDLWYSS) form a helical membrane-spanning segment. The Extracellular segment spans residues 75–98 (VYTPKILVTCISEDKSISFAGCLC). A disulfide bridge connects residues Cys-96 and Cys-188. The helical transmembrane segment at 99–119 (QFFFSAGLAYSECYLLAAVAY) threads the bilayer. Residues 120–138 (DRYVAISKPLLYAQAMSIK) lie on the Cytoplasmic side of the membrane. A helical membrane pass occupies residues 139–159 (LCALLVAVSYCGGFINSSIIT). The Extracellular portion of the chain corresponds to 160–196 (KKTFSFNFCRENIIDDFFCDLLPLVELACGEKGGYKI). Residues 197–216 (MMYFLLASNVICPAVLILAS) traverse the membrane as a helical segment. Over 217-236 (YLFIITSVLRISSSKGYLKA) the chain is Cytoplasmic. The helical transmembrane segment at 237–257 (FSTCSSHLTSVTLYYGSILYI) threads the bilayer. At 258 to 270 (YALPRSSYSFDMD) the chain is on the extracellular side. Residues 271-291 (KIVSTFYTVVFPMLNLMIYSL) traverse the membrane as a helical segment. The Cytoplasmic segment spans residues 292-305 (RNKDVKEALKKLLP).

This sequence belongs to the G-protein coupled receptor 1 family.

The protein resides in the cell membrane. In terms of biological role, odorant receptor. The polypeptide is Olfactory receptor 9G1 (OR9G1) (Homo sapiens (Human)).